Reading from the N-terminus, the 447-residue chain is Tubulin beta-5 chain (447 aa).

GTP contacts are provided by glutamine 11, glutamate 69, serine 138, glycine 142, threonine 143, glycine 144, asparagine 204, and asparagine 226. Glutamate 69 lines the Mg(2+) pocket.

This sequence belongs to the tubulin family. Dimer of alpha and beta chains. A typical microtubule is a hollow water-filled tube with an outer diameter of 25 nm and an inner diameter of 15 nM. Alpha-beta heterodimers associate head-to-tail to form protofilaments running lengthwise along the microtubule wall with the beta-tubulin subunit facing the microtubule plus end conferring a structural polarity. Microtubules usually have 13 protofilaments but different protofilament numbers can be found in some organisms and specialized cells. Mg(2+) is required as a cofactor.

The protein resides in the cytoplasm. Its subcellular location is the cytoskeleton. Its function is as follows. Tubulin is the major constituent of microtubules, a cylinder consisting of laterally associated linear protofilaments composed of alpha- and beta-tubulin heterodimers. Microtubules grow by the addition of GTP-tubulin dimers to the microtubule end, where a stabilizing cap forms. Below the cap, tubulin dimers are in GDP-bound state, owing to GTPase activity of alpha-tubulin. In Triticum aestivum (Wheat), this protein is Tubulin beta-5 chain (TUBB5).